Reading from the N-terminus, the 328-residue chain is Gonadotropin-releasing hormone receptor (328 aa).

Residues 1-38 (MANSDSPEQNENHCSSINSSIPLTPGSLPTLTLSGKIR) are Extracellular-facing. An N-linked (GlcNAc...) asparagine glycan is attached at Asn18. The helical transmembrane segment at 39–58 (VTVTFFLFLLSTIFNTSFLL) threads the bilayer. Residues 59–77 (KLQNWTQRKEKRKKLSRMK) are Cytoplasmic-facing. A helical transmembrane segment spans residues 78-97 (LLLKHLTLANLLETLIVMPL). At 98 to 115 (DGMWNITVQWYAGELLCK) the chain is on the extracellular side. Asn102 carries an N-linked (GlcNAc...) asparagine glycan. A disulfide bridge links Cys114 with Cys196. Residues 116–137 (VLSYLKLFSMYAPAFMMVVISL) form a helical membrane-spanning segment. Residues 138–164 (DRSLAITKPLAVKSNSKLGQFMIGLAW) are Cytoplasmic-facing. Residues 165–184 (LLSSIFAGPQLYIFGMIHLA) form a helical membrane-spanning segment. Residues 185–212 (DDSGQTEGFSQCVTHCSFPQWWHQAFYN) are Extracellular-facing. The chain crosses the membrane as a helical span at residues 213 to 232 (FFTFSCLFIIPLLIMVICNA). The Cytoplasmic segment spans residues 233–281 (KIIFTLTRVLHQDPHKLQLNQSKNNIPRARLRTLKMTVAFATSFTVCWT). Residues 282–300 (PYYVLGIWYWFDPDMVNRV) traverse the membrane as a helical segment. Residues 301–306 (SDPVNH) are Extracellular-facing. A helical membrane pass occupies residues 307-326 (FFFLFAFLNPCFNPLIYGYF). The Cytoplasmic segment spans residues 327–328 (SL).

The protein belongs to the G-protein coupled receptor 1 family.

Its subcellular location is the cell membrane. Functionally, receptor for gonadotropin releasing hormone (GnRH) that mediates the action of GnRH to stimulate the secretion of the gonadotropic hormones luteinizing hormone (LH) and follicle-stimulating hormone (FSH). This receptor mediates its action by association with G-proteins that activate a phosphatidylinositol-calcium second messenger system. The sequence is that of Gonadotropin-releasing hormone receptor (GNRHR) from Bos mutus grunniens (Wild yak).